A 329-amino-acid polypeptide reads, in one-letter code: Palmitoyltransferase pfa3 (329 aa).

Helical transmembrane passes span 14 to 34 (VLVI…MSGV), 49 to 69 (VGII…LTNL), 141 to 161 (FFFL…YSTF), 177 to 197 (AIYL…SIVM), and 243 to 263 (IMGK…GEGV). A DHHC domain is found at 97-147 (RFCEKCQEYKCDRSHHCSQCNKCILRMDHHCMWFKNCVGFRNHKFFFLECF).

This sequence belongs to the DHHC palmitoyltransferase family. PFA3 subfamily. Autopalmitoylated.

It localises to the vacuole membrane. The protein resides in the golgi apparatus membrane. It catalyses the reaction L-cysteinyl-[protein] + hexadecanoyl-CoA = S-hexadecanoyl-L-cysteinyl-[protein] + CoA. In terms of biological role, palmitoyltransferase specific for VAC8. Palmitoylates VAC8 at one or more of its N-terminal cysteine residues, which is required for its proper membrane localization. The protein is Palmitoyltransferase pfa3 (pfa3) of Schizosaccharomyces pombe (strain 972 / ATCC 24843) (Fission yeast).